We begin with the raw amino-acid sequence, 180 residues long: Large ribosomal subunit protein uL5 (180 aa).

It belongs to the universal ribosomal protein uL5 family. In terms of assembly, part of the 50S ribosomal subunit; part of the 5S rRNA/L5/L18/L25 subcomplex. Contacts the 5S rRNA and the P site tRNA. Forms a bridge to the 30S subunit in the 70S ribosome.

In terms of biological role, this is one of the proteins that bind and probably mediate the attachment of the 5S RNA into the large ribosomal subunit, where it forms part of the central protuberance. In the 70S ribosome it contacts protein S13 of the 30S subunit (bridge B1b), connecting the 2 subunits; this bridge is implicated in subunit movement. Contacts the P site tRNA; the 5S rRNA and some of its associated proteins might help stabilize positioning of ribosome-bound tRNAs. The protein is Large ribosomal subunit protein uL5 of Heliobacterium modesticaldum (strain ATCC 51547 / Ice1).